The primary structure comprises 104 residues: Cytochrome c oxidase assembly factor 6 (104 aa).

A disordered region spans residues Met1 to Arg22. The 55-residue stretch at Arg22–Phe76 folds into the CHCH domain. The Cx9C motif motif lies at Cys25–Cys35. Disulfide bonds link Cys25–Cys68 and Cys35–Cys57. Positions Cys57–Cys68 match the Cx10C motif motif.

This sequence belongs to the cytochrome c oxidase subunit 6B family. In terms of assembly, interacts with COX2.

The protein resides in the cytoplasm. It localises to the nucleus. The protein localises to the mitochondrion intermembrane space. In terms of biological role, involved in the maturation of the mitochondrial respiratory chain complex IV subunit MT-CO2/COX2. Thereby, may regulate early steps of complex IV assembly. Mitochondrial respiratory chain complex IV or cytochrome c oxidase is the component of the respiratory chain that catalyzes the transfer of electrons from intermembrane space cytochrome c to molecular oxygen in the matrix and as a consequence contributes to the proton gradient involved in mitochondrial ATP synthesis. May also be required for efficient formation of respiratory supercomplexes comprised of complexes III and IV. The protein is Cytochrome c oxidase assembly factor 6 of Saccharomyces cerevisiae (strain ATCC 204508 / S288c) (Baker's yeast).